The chain runs to 522 residues: Cyclic GMP-AMP synthase (522 aa).

Residues 1 to 144 (MQPWHGKAMQ…PPGPWDVPSP (144 aa)) are disordered. DNA-binding regions lie at residues 1-160 (MQPW…DAAP) and 173-215 (KLSR…GSYY). Lysine 7 is subject to N6-acetyllysine. Phosphoserine is present on serine 13. Lysine 21 carries the N6-acetyllysine modification. Serine 37 carries the phosphoserine modification. Lysine 47, lysine 50, lysine 56, lysine 62, and lysine 63 each carry N6-acetyllysine. Serine 64 carries the phosphoserine modification. Basic and acidic residues predominate over residues 64 to 73 (SAPDTQERPP). The required for association with the cell membrane stretch occupies residues 64–75 (SAPDTQERPPVR). Phosphothreonine is present on threonine 68. N6-acetyllysine occurs at positions 82 and 83. Polar residues predominate over residues 88-97 (AQDTQPSDAT). Threonine 91 carries the post-translational modification Phosphothreonine. Phosphoserine is present on residues serine 98, serine 116, and serine 129. The span at 98–118 (SAPGAEGLEPPAAREPALSRA) shows a compositional bias: low complexity. The interval 120 to 160 (SCRQRGARCSTKPRPPPGPWDVPSPGLPVSAPILVRRDAAP) is required for activation upon DNA viral infection. An N6-lactoyllysine modification is found at lysine 131. Over residues 132–144 (PRPPPGPWDVPSP) the composition is skewed to pro residues. Phosphoserine is present on serine 143. The Nuclear export signal signature appears at 169 to 174 (LEKLKL). A Glycyl lysine isopeptide (Lys-Gly) (interchain with G-Cter in ubiquitin) cross-link involves residue lysine 173. Aspartate 191 is modified (polyADP-ribosyl aspartic acid). Asparagine 210 carries the (Microbial infection) Deamidated asparagine; by herpes simplex virus 1/HHV-1 UL37 modification. Threonine 211 is a binding site for GTP. Position 213 is a phosphoserine (serine 213). Serine 213 lines the ATP pocket. Tyrosine 215 is modified (phosphotyrosine; by BLK). 2 residues coordinate Mg(2+): glutamate 225 and aspartate 227. An ATP-binding site is contributed by 225-227 (EFD). Aspartate 227 serves as a coordination point for 2',3'-cGAMP. A Glycyl lysine isopeptide (Lys-Gly) (interchain with G-Cter in SUMO) cross-link involves residue lysine 231. Lysine 285 is covalently cross-linked (Glycyl lysine isopeptide (Lys-Gly) (interchain with G-Cter in ubiquitin)). At glutamate 286 the chain carries 5-glutamyl polyglutamate. The Nuclear localization signal motif lies at 295-305 (DVIMKRKRGGS). The short motif at 299 to 302 (KRKR) is the KRKR-loop element. Serine 305 carries the post-translational modification Phosphoserine; by CDK1 and PKB. Glutamate 314 is modified (5-glutamyl glutamate). Aspartate 319 is a GTP binding site. Aspartate 319 contributes to the Mg(2+) binding site. Position 319 (aspartate 319) interacts with 2',3'-cGAMP. The interaction with collided ribosomes stretch occupies residues 341–382 (QNWLSAKVRKQLRLKPFYLVPKHAKEGNGFQEETWRLSFSHI). Lysine 347 participates in a covalent cross-link: Glycyl lysine isopeptide (Lys-Gly) (interchain with G-Cter in SUMO); alternate. Lysine 347 is covalently cross-linked (Glycyl lysine isopeptide (Lys-Gly) (interchain with G-Cter in ubiquitin); alternate). Positions 362 and 376 each coordinate 2',3'-cGAMP. 376-383 (RLSFSHIE) contacts GTP. Residue 380 to 383 (SHIE) participates in ATP binding. At lysine 384 the chain carries N6-acetyllysine. A Glycyl lysine isopeptide (Lys-Gly) (interchain with G-Cter in SUMO); alternate cross-link involves residue lysine 384. Residue lysine 384 forms a Glycyl lysine isopeptide (Lys-Gly) (interchain with G-Cter in ubiquitin); alternate linkage. Residues 384–407 (KEILNNHGKSKTCCENKEEKCCRK) are DNA-binding. Asparagine 389 is subject to (Microbial infection) Deamidated asparagine; by herpes simplex virus 1/HHV-1 UL37. Residue histidine 390 participates in Zn(2+) binding. N6-acetyllysine occurs at positions 392 and 394. A Glycyl lysine isopeptide (Lys-Gly) (interchain with G-Cter in SUMO) cross-link involves residue lysine 394. 3 residues coordinate Zn(2+): cysteine 396, cysteine 397, and cysteine 404. S-palmitoyl cysteine attachment occurs at residues cysteine 404 and cysteine 405. Residues lysine 411, lysine 414, lysine 427, and lysine 428 each participate in a glycyl lysine isopeptide (Lys-Gly) (interchain with G-Cter in ubiquitin) cross-link. Lysine 414 is subject to N6-acetyllysine. Lysine 414 is an ATP binding site. Positions 427–429 (KKH) match the KKH-loop motif. Phosphoserine is present on residues serine 434 and serine 435. 435–439 (SYHVK) provides a ligand contact to ATP. Glutamine 451 and glutamine 454 each carry (Microbial infection) Deamidated glutamine; by herpes simplex virus 1/HHV-1 UL37. Cysteine 474 carries S-palmitoyl cysteine lipidation. Lysine 479 participates in a covalent cross-link: Glycyl lysine isopeptide (Lys-Gly) (interchain with G-Cter in SUMO); alternate. Lysine 479 is covalently cross-linked (Glycyl lysine isopeptide (Lys-Gly) (interchain with G-Cter in ubiquitin); alternate). The residue at position 506 (lysine 506) is an N6-methyllysine.

This sequence belongs to the mab-21 family. In terms of assembly, monomer in the absence of DNA. Homodimer in presence of dsDNA: forms a 2:2 dimer with two enzymes binding to two DNA molecules. Interacts with nucleosomes; interaction is mainly mediated via histones H2A and H2B and inactivates the nucleotidyltransferase activity by blocking DNA-binding and subsequent activation. Interacts with PQBP1 (via WW domain). Interacts with TRIM14; this interaction recruits USP14, leading to deubiquitinate and stabilize CGAS and promote type I interferon production. Interacts with ZCCHC3; promoting sensing of dsDNA by CGAS. Interacts (when not monomethylated) with (poly-ADP-ribosylated) PARP1; interaction takes place in the nucleus and prevents the formation of the PARP1-TIMELESS complex. Interacts (when monomethylated) with SGF29; interaction with SGF29 prevents interaction with PARP1. Interacts with PCBP2; preventing the formation of liquid-like droplets in which CGAS is activated. Interacts with IRGM; promoting CGAS degradation. Interacts with DDX41. (Microbial infection) Interacts with herpes virus 8/HHV-8 protein ORF52; this interaction inhibits cGAS enzymatic activity by preventing the formation of liquid-like droplets by CGAS. As to quaternary structure, (Microbial infection) Interacts with herpes simplex virus 1 protein UL37; this interaction deaminates CGAS and inhibits its activation. In terms of assembly, (Microbial infection) Interacts with vaccinia virus protein OPG067; this interaction promotes CGAS proteasomal degradation. (Microbial infection) Interacts with cytomegalovirus protein UL31; this interaction promotes dissociation of DNA from CGAS, thereby inhibiting the enzymatic activity of CGAS. As to quaternary structure, (Microbial infection) Interacts with herpes simplex virus 1 tegument protein VP22 (UL49); this interaction inhibits cGAS enzymatic activity by preventing the formation of liquid-like droplets by CGAS. In terms of assembly, (Microbial infection) Interacts with herpesvirus 3 tegument protein VP22 (ORF9); this interaction inhibits cGAS enzymatic activity by preventing the formation of liquid-like droplets by CGAS. (Microbial infection) Interacts with human cytomegalovirus proteins UL42 and UL83; these interactions result in the inhibition of cGAS-STING signaling. Mg(2+) serves as cofactor. Mn(2+) is required as a cofactor. It depends on Zn(2+) as a cofactor. The N-terminal disordered part (1-160) is phosphorylated by AURKB during the G2-M transition, blocking CGAS liquid phase separation and preventing activation. Phosphorylation at Tyr-215 by BLK promotes cytosolic retention. Localizes into the nucleus following dephosphorylation at Tyr-215. Phosphorylation at Ser-435 activates the nucleotidyltransferase activity. Dephosphorylation at Ser-435 by PPP6C impairs its ability to bind GTP, thereby inactivating it. Phosphorylation at Thr-68 and Ser-213 by PRKDC inhibits its cyclic GMP-AMP synthase activity by impairing homodimerization and activation. Phosphorylation at Ser-305 by AKT (AKT1, AKT2 or AKT3) suppresses the nucleotidyltransferase activity. Phosphorylation at Ser-305 by CDK1 during mitosis leads to its inhibition, thereby preventing CGAS activation by self-DNA during mitosis. Dephosphorylated at Ser-305 by protein phosphatase PP1 upon mitotic exit. In terms of processing, ubiquitinated at Lys-414 via 'Lys-48'-linked polyubiquitin chains, leading to its SQSTM1-mediated autophagic degradation. Interaction with TRIM14 promotes recruitment of USP14, leading to deubiquitinate Lys-414 and stabilize CGAS. Ubiquitinated at Lys-173 and Lys-384 by RNF185 via 'Lys-27'-linked polyubiquitination, promoting CGAS cyclic GMP-AMP synthase activity. Monoubiquitination at Lys-347 by TRIM56 promotes oligomerization and subsequent activation. Monoubiquitination by TRIM41 promotes CGAS activation. Ubiquitination at Lys-285 and Lys-479 via 'Lys-48'-linked polyubiquitination promotes its degradation. Deubiquitination at Lys-285 by USP29 promotes its stabilization. Deubiquitinated by USP27X, promoting its stabilization. Ubiquitinated at Lys-411 via 'Lys-63'-linked polyubiquitin chains by MARCHF8, leading to the inhibition of its DNA binding ability. In cycling cells, nucleosome-bound CGAS is ubiquitinated at Lys-427 and Lys-428 via 'Lys-48'-linked polyubiquitin chains by the ECS(SPSB3) complex, leading to its degradation: ubiquitination and degradation of nuclear CGAS during G1 and G2 phases is required to promote low intranuclear CGAS abundance before the next mitotic cycle. Post-translationally, sumoylated at Lys-231 and Lys-479 by TRIM38 in uninfected cells and during the early phase of viral infection, promoting its stability by preventing ubiquitination at Lys-285 and Lys-479, and subsequent degradation. Desumoylated by SENP2 during the late phase of viral infection. Sumoylation at Lys-347, Lys-384 and Lys-394 prevents DNA-binding, oligomerization and nucleotidyltransferase activity. Desumoylation at Lys-347, Lys-384 and Lys-394 by SENP7 relieves inhibition and activates CGAS. Polyglutamylated by TTLL6 at Glu-286, leading to impair DNA-binding activity. Monoglutamylated at Glu-314 by TTLL4, leading to impair the nucleotidyltransferase activity. Deglutamylated by AGBL5/CCP5 and AGBL6/CCP6. In terms of processing, acetylation at Lys-384, Lys-394 and Lys-414 inhibits the cyclic GMP-AMP synthase activity. Deacetylated upon cytosolic DNA challenge such as viral infections. Acetylation can be mediated by aspirin (acetylsalicylate) drug, which directly acetylates CGAS. Acetylation by aspirin efficiently inhibits CGAS-mediated immune responses and is able to suppress self-DNA-induced autoimmunity. Acetylation at Lys-47, Lys-56, Lys-62 and Lys-83 by KAT5 increases the cyclic GMP-AMP synthase activity by promoting DNA-binding and subsequent activation. Post-translationally, proteolytically cleaved by apoptotic caspases during apoptosis, leading to its inactivation. The damage of the nucleus and the mitochondria during apoptosis leads to leakage of nuclear and mitochondrial DNA, which activate CGAS: cleavage and inactivation during apoptosis in required to prevent cytokine overproduction. Cleaved by CASP3 at Asp-319 during virus-induced apoptosis, thereby inactivating it and preventing cytokine overproduction. Cleaved by CASP1 at Asp-140 and Asp-157 upon DNA virus infection; the cleavage impairs cGAMP production. Also cleaved by the pyroptotic CASP4 and CASP5 during non-canonical inflammasome activation; they don't cut at the same sites than CASP1. Degraded via selective autophagy following interaction with IRGM. IRGM promotes CGAS recruitment to autophagosome membranes, promoting its SQSTM1/p62-dependent autophagic degradation. In terms of processing, poly-ADP-ribosylation at Asp-191 by PARP1 impairs DNA-binding, thereby preventing the cyclic GMP-AMP synthase activity. Post-translationally, palmitoylation at Cys-474 by ZDHHC18 impairs DNA-binding, thereby preventing the cyclic GMP-AMP synthase activity. Palmitoylation at Cys-404 and Cys-405 by ZDHHC9 promotes homodimerization and cyclic GMP-AMP synthase activity. Depalmitoylation at Cys-404 and Cys-405 by LYPLAL1 impairs homodimerization and cyclic GMP-AMP synthase activity. Monomethylated at Lys-506 by SETD7. Monomethylation promotes interaction with SGF29, preventing interaction between PARP1 nad SGF29. Demethylation by RIOX1 promotes interaction with PARP1, followed by PARP1 inactivation. In terms of processing, lactylation by AARS2 prevents ability to undergo liquid-liquid phase separation (LLPS), thereby inhibiting CGAS activation. Post-translationally, (Microbial infection) Deamidated on 'Asn-210' by herpes simplex virus 1 protein UL37. This modification significantly reduces CGAS-dependent cGAMP production and innate immune signaling induced by dsDNA. (Microbial infection) Degraded by an autophagy-mediated mechanism in presence of Chikungunya virus capsid protein. As to expression, expressed in the monocytic cell line THP1.

It is found in the nucleus. Its subcellular location is the chromosome. The protein localises to the cell membrane. The protein resides in the cytoplasm. It localises to the cytosol. The catalysed reaction is GTP + ATP = 2',3'-cGAMP + 2 diphosphate. It catalyses the reaction GTP + ATP = pppGp(2'-5')A + diphosphate. The enzyme catalyses pppGp(2'-5')A = 2',3'-cGAMP + diphosphate. Its activity is regulated as follows. The enzyme activity is strongly increased by double-stranded DNA (dsDNA), but not by single-stranded DNA or RNA. DNA-binding induces the formation of liquid-like droplets in which CGAS is activated. Liquid-like droplets also create a selective environment that restricts entry of negative regulators, such as TREX1 or BANF1/BAF, allowing sensing of DNA. A number of mechanisms exist to restrict its activity toward self-DNA. The nucleotidyltransferase activity is inhibited in the nucleus via its association with nucleosomes: interacts with the acidic patch of histones H2A and H2B, thereby blocking DNA-binding and subsequent activation. CGAS is also inactive when associated with mitotic chromatin. Chromatin-bound CGAS cannot be activated by exogenous DNA in mitotic cells: phosphorylation of the N-terminal disordered part by AURKB during the G2-M transition blocks CGAS liquid phase separation and activation. Activity toward self-DNA is inhibited by BANF1/BAF upon acute loss of nuclear membrane integrity: BANF1/BAF acts by outcompeting CGAS for DNA-binding, thereby preventing CGAS activation. DNA-induced activation at micronuclei is also limited by TREX1, which degrades micronuclear DNA upon nuclear envelope rupture, thereby preventing CGAS activation. CGAS can be released from nucleosomes and activated by MRE11 component of the MRN complex, which displaces CGAS from acidic-patch-mediated sequestration. Acetylation at Lys-384, Lys-394 and Lys-414 inhibits the cyclic GMP-AMP synthase activity. Inhibited by aspirin (acetylsalicylate) drug, which acetylates CGAS. Acetylation by KAT5 increases the cyclic GMP-AMP synthase activity by promoting DNA-binding and subsequent activation. Phosphorylation at Ser-305 suppresses the nucleotidyltransferase activity. Phosphorylation at Ser-435 promotes the cyclic GMP-AMP synthase activity. Phosphorylation at Thr-68 and Ser-213 inhibits its cyclic GMP-AMP synthase activity. Ubiquitination at Lys-173 and Lys-384 via 'Lys-27'-linked polyubiquitination enhances the cyclic GMP-AMP synthase activity. Monoubiquitination at Lys-347 promotes oligomerization and subsequent activation. Sumoylation at Lys-347, Lys-384 and Lys-394 prevents DNA-binding, oligomerization and nucleotidyltransferase activity. The enzyme activity is impaired by the cleavage at Asp-140 and Asp-157 produced by CASP1. In addition to DNA, also activated by collided ribosomes upon translation stress: specifically binds collided ribosomes, promoting its activation and triggering type-I interferon production. Strongly inhibited by compound PF-06928215, which is specific for human protein. Inhibited by small-molecule inhibitors with a pyridoindole tricyclic core G108, G140 and G150. (Microbial infection) Nucleotidyltransferase activity is inhibited by different herpesvirus tegument proteins (Herpes simplex virus 1 tegument protein VP22, herpes virus 8 protein ORF52 and herpesvirus 3 tegument protein VP22/ORF9). Viral tegument proteins act by disrupting liquid-like droplets in which CGAS is activated, thereby preventing CGAS activity. Functionally, nucleotidyltransferase that catalyzes the formation of cyclic GMP-AMP (2',3'-cGAMP) from ATP and GTP and plays a key role in innate immunity. Catalysis involves both the formation of a 2',5' phosphodiester linkage at the GpA step and the formation of a 3',5' phosphodiester linkage at the ApG step, producing c[G(2',5')pA(3',5')p]. Acts as a key DNA sensor: directly binds double-stranded DNA (dsDNA), inducing the formation of liquid-like droplets in which CGAS is activated, leading to synthesis of 2',3'-cGAMP, a second messenger that binds to and activates STING1, thereby triggering type-I interferon production. Preferentially recognizes and binds curved long dsDNAs of a minimal length of 40 bp. Acts as a key foreign DNA sensor, the presence of double-stranded DNA (dsDNA) in the cytoplasm being a danger signal that triggers the immune responses. Has antiviral activity by sensing the presence of dsDNA from DNA viruses in the cytoplasm. Also acts as an innate immune sensor of infection by retroviruses, such as HIV-2, by detecting the presence of reverse-transcribed DNA in the cytosol. In contrast, HIV-1 is poorly sensed by CGAS, due to its capsid that cloaks viral DNA from CGAS detection. Detection of retroviral reverse-transcribed DNA in the cytosol may be indirect and be mediated via interaction with PQBP1, which directly binds reverse-transcribed retroviral DNA. Also detects the presence of DNA from bacteria, such as M.tuberculosis. 2',3'-cGAMP can be transferred from producing cells to neighboring cells through gap junctions, leading to promote STING1 activation and convey immune response to connecting cells. 2',3'-cGAMP can also be transferred between cells by virtue of packaging within viral particles contributing to IFN-induction in newly infected cells in a cGAS-independent but STING1-dependent manner. Also senses the presence of neutrophil extracellular traps (NETs) that are translocated to the cytosol following phagocytosis, leading to synthesis of 2',3'-cGAMP. In addition to foreign DNA, can also be activated by endogenous nuclear or mitochondrial DNA. When self-DNA leaks into the cytosol during cellular stress (such as mitochondrial stress, SARS-CoV-2 infection causing severe COVID-19 disease, DNA damage, mitotic arrest or senescence), or is present in form of cytosolic micronuclei, CGAS is activated leading to a state of sterile inflammation. Acts as a regulator of cellular senescence by binding to cytosolic chromatin fragments that are present in senescent cells, leading to trigger type-I interferon production via STING1 and promote cellular senescence. Also involved in the inflammatory response to genome instability and double-stranded DNA breaks: acts by localizing to micronuclei arising from genome instability. Micronuclei, which are frequently found in cancer cells, consist of chromatin surrounded by their own nuclear membrane: following breakdown of the micronuclear envelope, a process associated with chromothripsis, CGAS binds self-DNA exposed to the cytosol, leading to 2',3'-cGAMP synthesis and subsequent activation of STING1 and type-I interferon production. Activated in response to prolonged mitotic arrest, promoting mitotic cell death. In a healthy cell, CGAS is however kept inactive even in cellular events that directly expose it to self-DNA, such as mitosis, when cGAS associates with chromatin directly after nuclear envelope breakdown or remains in the form of postmitotic persistent nuclear cGAS pools bound to chromatin. Nuclear CGAS is inactivated by chromatin via direct interaction with nucleosomes, which block CGAS from DNA binding and thus prevent CGAS-induced autoimmunity. Also acts as a suppressor of DNA repair in response to DNA damage: inhibits homologous recombination repair by interacting with PARP1, the CGAS-PARP1 interaction leading to impede the formation of the PARP1-TIMELESS complex. In addition to DNA, also sense translation stress: in response to translation stress, translocates to the cytosol and associates with collided ribosomes, promoting its activation and triggering type-I interferon production. In contrast to other mammals, human CGAS displays species-specific mechanisms of DNA recognition and produces less 2',3'-cGAMP, allowing a more fine-tuned response to pathogens. This Homo sapiens (Human) protein is Cyclic GMP-AMP synthase.